A 440-amino-acid chain; its full sequence is L-seryl-tRNA(Sec) selenium transferase (440 aa).

Lys-282 is subject to N6-(pyridoxal phosphate)lysine.

This sequence belongs to the SelA family. The cofactor is pyridoxal 5'-phosphate.

It is found in the cytoplasm. It carries out the reaction L-seryl-tRNA(Sec) + selenophosphate + H(+) = L-selenocysteinyl-tRNA(Sec) + phosphate. The protein operates within aminoacyl-tRNA biosynthesis; selenocysteinyl-tRNA(Sec) biosynthesis; selenocysteinyl-tRNA(Sec) from L-seryl-tRNA(Sec) (bacterial route): step 1/1. Functionally, converts seryl-tRNA(Sec) to selenocysteinyl-tRNA(Sec) required for selenoprotein biosynthesis. The sequence is that of L-seryl-tRNA(Sec) selenium transferase from Campylobacter jejuni subsp. doylei (strain ATCC BAA-1458 / RM4099 / 269.97).